Here is a 165-residue protein sequence, read N- to C-terminus: Nucleotide-binding protein A9601_05361 (165 aa).

Belongs to the YajQ family.

Functionally, nucleotide-binding protein. This is Nucleotide-binding protein A9601_05361 from Prochlorococcus marinus (strain AS9601).